A 161-amino-acid polypeptide reads, in one-letter code: Nucleotide-binding protein Rmet_2899 (161 aa).

This sequence belongs to the YajQ family.

In terms of biological role, nucleotide-binding protein. This Cupriavidus metallidurans (strain ATCC 43123 / DSM 2839 / NBRC 102507 / CH34) (Ralstonia metallidurans) protein is Nucleotide-binding protein Rmet_2899.